A 313-amino-acid chain; its full sequence is Serine/threonine-protein phosphatase PP2A-3 catalytic subunit (313 aa).

Mn(2+)-binding residues include Asp-61, His-63, Asp-89, and Asn-121. Residue His-122 is the Proton donor of the active site. Mn(2+)-binding residues include His-171 and His-245. Leu-313 bears the Leucine methyl ester mark.

This sequence belongs to the PPP phosphatase family. PP-2A subfamily. As to quaternary structure, PP2A consists of a common heterodimeric core enzyme, composed of a 36 kDa catalytic subunit (subunit C) and a 65 kDa constant regulatory subunit (subunit A), that associates with a variety of regulatory subunits such as subunits B (the R2/B/PR55/B55, R3/B''/PR72/PR130/PR59 and R5/B'/B56 families). Interacts with ACR4. Interacts with TAP46. Interacts with SIC/RON3. The cofactor is Mn(2+). Reversibly methyl esterified on Leu-313 by leucine carboxyl methyltransferase 1 (LCMT1) and pectin methylesterase 1 (PME1). Carboxyl methylation influences the affinity of the catalytic subunit for the different regulatory subunits, thereby modulating the PP2A holoenzyme's substrate specificity, enzyme activity and cellular localization. In terms of processing, phosphorylation of either threonine (by autophosphorylation-activated protein kinase) or tyrosine results in inactivation of the phosphatase. Auto-dephosphorylation has been suggested as a mechanism for reactivation.

Its subcellular location is the cytoplasm. It catalyses the reaction O-phospho-L-seryl-[protein] + H2O = L-seryl-[protein] + phosphate. It carries out the reaction O-phospho-L-threonyl-[protein] + H2O = L-threonyl-[protein] + phosphate. Its function is as follows. Functions redundantly with PP2A4, and is involved in establishing auxin gradients, apical-basal axis of polarity and root and shoot apical meristem during embryogenesis. May dephosphorylate PIN1 and regulate its subcellular distribution for polar auxin transport. Involved in the regulation of formative cell division in roots by dephosphorylating ACR4 protein kinase. The chain is Serine/threonine-protein phosphatase PP2A-3 catalytic subunit from Arabidopsis thaliana (Mouse-ear cress).